The following is a 245-amino-acid chain: tRNA1(Val) (adenine(37)-N6)-methyltransferase (245 aa).

This sequence belongs to the methyltransferase superfamily. tRNA (adenine-N(6)-)-methyltransferase family.

It localises to the cytoplasm. It catalyses the reaction adenosine(37) in tRNA1(Val) + S-adenosyl-L-methionine = N(6)-methyladenosine(37) in tRNA1(Val) + S-adenosyl-L-homocysteine + H(+). In terms of biological role, specifically methylates the adenine in position 37 of tRNA(1)(Val) (anticodon cmo5UAC). The protein is tRNA1(Val) (adenine(37)-N6)-methyltransferase of Salmonella typhi.